We begin with the raw amino-acid sequence, 500 residues long: FAD-linked oxidoreductase srdI (500 aa).

The first 20 residues, 1-20, serve as a signal peptide directing secretion; it reads MHLSSSLLFTSALLAGGINA. The N-linked (GlcNAc...) asparagine glycan is linked to Asn47. Residues 69-241 form the FAD-binding PCMH-type domain; the sequence is YRPPSYQAAI…TQATYKMHKS (173 aa). 2 N-linked (GlcNAc...) asparagine glycosylation sites follow: Asn257 and Asn282.

It belongs to the oxygen-dependent FAD-linked oxidoreductase family. Requires FAD as cofactor.

FAD-linked oxidoreductase; part of the gene cluster that mediates the biosynthesis of sordarial, a salicylic aldehyde structurally related to the phytotoxin pyriculol. The most interesting aspect of this pathway is formation of an aromatic product from the highly reducing polyketide synthase srdA. SrdA synthesizes a reduced polyketide chain from one molecule of acetyl-CoA and five molecules of malonyl-CoA. The polyketide chain is then reductively released as an aldehyde. The oxidoreductases srdC, srdD and srdE then oxidize one of the hydroxy groups to facilitate the intramolecular aldol condensation, followed by dehydration to yield a salicylic aldehyde. This aldehyde can undergo facile reduction by endogenous reductases to yield the alcohol 1-hydroxy-2-hydroxymethyl-3-pent-1,3-dienylbenzene. The flavin-dependent srdI counteract against the propensity of the aldehydes to be reduced under physiological conditions and is responsible for reoxidizing 1-hydroxy-2-hydroxymethyl-3-pent-1,3-dienylbenzene back to the salicylic aldehyde. This salicylic aldehyde is then selectively epoxidized by the cupin-domain-containing oxidoreductase srdB to yield the epoxide, which can be hydrolyzed stereoselectively by the hydrolase srdG to give the final product sordarial. The protein is FAD-linked oxidoreductase srdI of Neurospora crassa (strain ATCC 24698 / 74-OR23-1A / CBS 708.71 / DSM 1257 / FGSC 987).